Consider the following 508-residue polypeptide: Serine/threonine protein kinase OSK3 (508 aa).

In terms of domain architecture, Protein kinase spans 17 to 269 (YNLGRTLGIG…IREIREHQWF (253 aa)). ATP-binding positions include 23-31 (LGIGSFGKV) and K46. D140 acts as the Proton acceptor in catalysis. One can recognise a UBA domain in the interval 290–330 (MIDEDTLQDVVNLGYGKDHVCESLRNRLQNEATVAYYLLLD). Positions 459 to 507 (NGRLPAVIKFEIQLYKTRDEKYLLDMQRVTGPQLLFLDFCADFLTKLRV) constitute a KA1 domain.

The protein belongs to the protein kinase superfamily. Ser/Thr protein kinase family. Interacts with HDR1. In terms of tissue distribution, strongly expressed in immature seeds. Mostly expressed in panicles, and to a lower extent, in leaf sheaths.

The protein resides in the nucleus. The enzyme catalyses L-seryl-[protein] + ATP = O-phospho-L-seryl-[protein] + ADP + H(+). It catalyses the reaction L-threonyl-[protein] + ATP = O-phospho-L-threonyl-[protein] + ADP + H(+). This Oryza sativa subsp. indica (Rice) protein is Serine/threonine protein kinase OSK3.